The chain runs to 82 residues: RNA-binding protein Hfq (82 aa).

In terms of domain architecture, Sm spans 11 to 71 (DTFLNHVRKT…ISTIMPGAPI (61 aa)).

Belongs to the Hfq family. As to quaternary structure, homohexamer.

Functionally, RNA chaperone that binds small regulatory RNA (sRNAs) and mRNAs to facilitate mRNA translational regulation in response to envelope stress, environmental stress and changes in metabolite concentrations. Also binds with high specificity to tRNAs. This is RNA-binding protein Hfq from Bradyrhizobium sp. (strain BTAi1 / ATCC BAA-1182).